Here is a 363-residue protein sequence, read N- to C-terminus: Histidinol-phosphate aminotransferase (363 aa).

Lysine 218 carries the N6-(pyridoxal phosphate)lysine modification.

The protein belongs to the class-II pyridoxal-phosphate-dependent aminotransferase family. Histidinol-phosphate aminotransferase subfamily. Homodimer. Pyridoxal 5'-phosphate is required as a cofactor.

It catalyses the reaction L-histidinol phosphate + 2-oxoglutarate = 3-(imidazol-4-yl)-2-oxopropyl phosphate + L-glutamate. It participates in amino-acid biosynthesis; L-histidine biosynthesis; L-histidine from 5-phospho-alpha-D-ribose 1-diphosphate: step 7/9. The polypeptide is Histidinol-phosphate aminotransferase (Xanthomonas axonopodis pv. citri (strain 306)).